A 333-amino-acid chain; its full sequence is 4-hydroxythreonine-4-phosphate dehydrogenase (333 aa).

Substrate contacts are provided by histidine 133 and threonine 134. Residues histidine 169, histidine 214, and histidine 269 each contribute to the a divalent metal cation site. Residues lysine 277, asparagine 286, and arginine 295 each contribute to the substrate site.

It belongs to the PdxA family. In terms of assembly, homodimer. Zn(2+) is required as a cofactor. It depends on Mg(2+) as a cofactor. The cofactor is Co(2+).

It is found in the cytoplasm. The enzyme catalyses 4-(phosphooxy)-L-threonine + NAD(+) = 3-amino-2-oxopropyl phosphate + CO2 + NADH. The protein operates within cofactor biosynthesis; pyridoxine 5'-phosphate biosynthesis; pyridoxine 5'-phosphate from D-erythrose 4-phosphate: step 4/5. Its function is as follows. Catalyzes the NAD(P)-dependent oxidation of 4-(phosphooxy)-L-threonine (HTP) into 2-amino-3-oxo-4-(phosphooxy)butyric acid which spontaneously decarboxylates to form 3-amino-2-oxopropyl phosphate (AHAP). The sequence is that of 4-hydroxythreonine-4-phosphate dehydrogenase from Caulobacter vibrioides (strain ATCC 19089 / CIP 103742 / CB 15) (Caulobacter crescentus).